We begin with the raw amino-acid sequence, 247 residues long: tRNA1(Val) (adenine(37)-N6)-methyltransferase (247 aa).

It belongs to the methyltransferase superfamily. tRNA (adenine-N(6)-)-methyltransferase family.

It localises to the cytoplasm. The catalysed reaction is adenosine(37) in tRNA1(Val) + S-adenosyl-L-methionine = N(6)-methyladenosine(37) in tRNA1(Val) + S-adenosyl-L-homocysteine + H(+). Its function is as follows. Specifically methylates the adenine in position 37 of tRNA(1)(Val) (anticodon cmo5UAC). In Edwardsiella ictaluri (strain 93-146), this protein is tRNA1(Val) (adenine(37)-N6)-methyltransferase.